A 334-amino-acid polypeptide reads, in one-letter code: Protein-glutamate methylesterase FrzG (334 aa).

The CheB-type methylesterase domain occupies 147-334 (PYPLVAIAAS…AALMQWVDVC (188 aa)). Catalysis depends on residues Ser-156, His-183, and Asp-276.

It carries out the reaction [protein]-L-glutamate 5-O-methyl ester + H2O = L-glutamyl-[protein] + methanol + H(+). Functionally, probable methylesterase. Required for the normal aggregation of M.xanthus cells during fruiting body formation. It is also a component of a sensory transduction pathway that controls the frequency at which cells reverse their gliding direction. It may remove the methyl group from the gamma-glutamyl methyl ester residues in FrzCD. This chain is Protein-glutamate methylesterase FrzG (frzG), found in Myxococcus xanthus.